The primary structure comprises 120 residues: Large ribosomal subunit protein uL22 (120 aa).

It belongs to the universal ribosomal protein uL22 family. As to quaternary structure, part of the 50S ribosomal subunit.

Functionally, this protein binds specifically to 23S rRNA; its binding is stimulated by other ribosomal proteins, e.g. L4, L17, and L20. It is important during the early stages of 50S assembly. It makes multiple contacts with different domains of the 23S rRNA in the assembled 50S subunit and ribosome. The globular domain of the protein is located near the polypeptide exit tunnel on the outside of the subunit, while an extended beta-hairpin is found that lines the wall of the exit tunnel in the center of the 70S ribosome. The protein is Large ribosomal subunit protein uL22 of Corynebacterium urealyticum (strain ATCC 43042 / DSM 7109).